We begin with the raw amino-acid sequence, 233 residues long: Aspartate/glutamate leucyltransferase (233 aa).

This sequence belongs to the R-transferase family. Bpt subfamily.

The protein localises to the cytoplasm. It catalyses the reaction N-terminal L-glutamyl-[protein] + L-leucyl-tRNA(Leu) = N-terminal L-leucyl-L-glutamyl-[protein] + tRNA(Leu) + H(+). The catalysed reaction is N-terminal L-aspartyl-[protein] + L-leucyl-tRNA(Leu) = N-terminal L-leucyl-L-aspartyl-[protein] + tRNA(Leu) + H(+). In terms of biological role, functions in the N-end rule pathway of protein degradation where it conjugates Leu from its aminoacyl-tRNA to the N-termini of proteins containing an N-terminal aspartate or glutamate. This Vibrio campbellii (strain ATCC BAA-1116) protein is Aspartate/glutamate leucyltransferase.